Here is a 127-residue protein sequence, read N- to C-terminus: Protein ApaG (127 aa).

Positions 3–127 (NNPSSKIEVA…FVLSVPRTLH (125 aa)) constitute an ApaG domain.

The protein is Protein ApaG of Xylella fastidiosa (strain M23).